Reading from the N-terminus, the 266-residue chain is Translation initiation factor 2 subunit alpha (266 aa).

Positions Gly-12–Lys-83 constitute an S1 motif domain.

This sequence belongs to the eIF-2-alpha family. In terms of assembly, heterotrimer composed of an alpha, a beta and a gamma chain.

Its function is as follows. eIF-2 functions in the early steps of protein synthesis by forming a ternary complex with GTP and initiator tRNA. In Saccharolobus islandicus (strain Y.N.15.51 / Yellowstone #2) (Sulfolobus islandicus), this protein is Translation initiation factor 2 subunit alpha.